A 39-amino-acid polypeptide reads, in one-letter code: Photosystem II reaction center protein J (39 aa).

Residues 7–27 traverse the membrane as a helical segment; sequence IPLWIVAVVVGLGVVTVVGLF.

It belongs to the PsbJ family. As to quaternary structure, PSII is composed of 1 copy each of membrane proteins PsbA, PsbB, PsbC, PsbD, PsbE, PsbF, PsbH, PsbI, PsbJ, PsbK, PsbL, PsbM, PsbT, PsbX, PsbY, PsbZ, Psb30/Ycf12, peripheral proteins PsbO, CyanoQ (PsbQ), PsbU, PsbV and a large number of cofactors. It forms dimeric complexes.

It localises to the cellular thylakoid membrane. One of the components of the core complex of photosystem II (PSII). PSII is a light-driven water:plastoquinone oxidoreductase that uses light energy to abstract electrons from H(2)O, generating O(2) and a proton gradient subsequently used for ATP formation. It consists of a core antenna complex that captures photons, and an electron transfer chain that converts photonic excitation into a charge separation. This Synechococcus sp. (strain JA-3-3Ab) (Cyanobacteria bacterium Yellowstone A-Prime) protein is Photosystem II reaction center protein J.